The following is a 447-amino-acid chain: Ribosomal protein uS12 methylthiotransferase RimO (447 aa).

Residues 4-114 (PKVGFVSLGC…VMEAVHEYVP (111 aa)) enclose the MTTase N-terminal domain. Residues cysteine 13, cysteine 49, cysteine 78, cysteine 147, cysteine 151, and cysteine 154 each contribute to the [4Fe-4S] cluster site. Residues 133–370 (LTPKHYAYLK…MQVQQQISAA (238 aa)) form the Radical SAM core domain. Residues 373 to 443 (QKRIGQTMTV…EYDLFAKLIK (71 aa)) form the TRAM domain.

The protein belongs to the methylthiotransferase family. RimO subfamily. [4Fe-4S] cluster is required as a cofactor.

The protein localises to the cytoplasm. The enzyme catalyses L-aspartate(89)-[ribosomal protein uS12]-hydrogen + (sulfur carrier)-SH + AH2 + 2 S-adenosyl-L-methionine = 3-methylsulfanyl-L-aspartate(89)-[ribosomal protein uS12]-hydrogen + (sulfur carrier)-H + 5'-deoxyadenosine + L-methionine + A + S-adenosyl-L-homocysteine + 2 H(+). Functionally, catalyzes the methylthiolation of an aspartic acid residue of ribosomal protein uS12. The polypeptide is Ribosomal protein uS12 methylthiotransferase RimO (Acinetobacter baumannii (strain SDF)).